We begin with the raw amino-acid sequence, 427 residues long: Glutamate-1-semialdehyde 2,1-aminomutase (427 aa).

Position 265 is an N6-(pyridoxal phosphate)lysine (lysine 265).

Belongs to the class-III pyridoxal-phosphate-dependent aminotransferase family. HemL subfamily. In terms of assembly, homodimer. The cofactor is pyridoxal 5'-phosphate.

The protein localises to the cytoplasm. It catalyses the reaction (S)-4-amino-5-oxopentanoate = 5-aminolevulinate. Its pathway is porphyrin-containing compound metabolism; protoporphyrin-IX biosynthesis; 5-aminolevulinate from L-glutamyl-tRNA(Glu): step 2/2. The chain is Glutamate-1-semialdehyde 2,1-aminomutase from Burkholderia orbicola (strain MC0-3).